A 218-amino-acid polypeptide reads, in one-letter code: Albicidin resistance protein (218 aa).

The protein resides in the periplasm. Albicidin resistance protein binds to form a complex without antibiotic activity but without catalyzing any further chemical modifications to albicidin. The polypeptide is Albicidin resistance protein (Klebsiella oxytoca).